Here is a 275-residue protein sequence, read N- to C-terminus: Nitrogenase iron protein 2 (275 aa).

Position 9–16 (9–16 (GKGGIGKS)) interacts with ATP. Cys-97 provides a ligand contact to [4Fe-4S] cluster. The residue at position 100 (Arg-100) is an ADP-ribosylarginine; by dinitrogenase reductase ADP-ribosyltransferase. Cys-132 provides a ligand contact to [4Fe-4S] cluster.

This sequence belongs to the NifH/BchL/ChlL family. Homodimer. [4Fe-4S] cluster serves as cofactor. Post-translationally, the reversible ADP-ribosylation of Arg-100 inactivates the nitrogenase reductase and regulates nitrogenase activity.

The catalysed reaction is N2 + 8 reduced [2Fe-2S]-[ferredoxin] + 16 ATP + 16 H2O = H2 + 8 oxidized [2Fe-2S]-[ferredoxin] + 2 NH4(+) + 16 ADP + 16 phosphate + 6 H(+). Functionally, the key enzymatic reactions in nitrogen fixation are catalyzed by the nitrogenase complex, which has 2 components: the iron protein (component 2) and a component 1 which is either a molybdenum-iron protein, a vanadium-iron, or an iron-iron protein. The protein is Nitrogenase iron protein 2 (anfH) of Rhodobacter capsulatus (Rhodopseudomonas capsulata).